The primary structure comprises 255 residues: MNINKIALIYNQNSKHLAIIEEIKKLYNYCKIEEAEAIIVIGGDGALLHNIHRYMHLNIPFYGVNLGNLGFLMNPLDTKNLSQNIHESTVSILNPLLMQAEDISGQIYTALAINEVSIFRKTNQAAKFRIDVNGIERMSELVADGALIATPAGSSAYNLSAGGPILPLESNMLCLTPICSFRPRRWHGALLLASATIQFKILNTNKRPVNATADFQEFNNITNVTVKSTTDTPIKLLFNKNHTLEDRIIKEQFGG.

Asp44 acts as the Proton acceptor in catalysis. NAD(+) is bound by residues 44 to 45 (DG), His49, 114 to 115 (NE), Asp144, Ala152, 155 to 160 (SAYNLS), and Gln216.

It belongs to the NAD kinase family. A divalent metal cation is required as a cofactor.

It localises to the cytoplasm. The enzyme catalyses NAD(+) + ATP = ADP + NADP(+) + H(+). Its function is as follows. Involved in the regulation of the intracellular balance of NAD and NADP, and is a key enzyme in the biosynthesis of NADP. Catalyzes specifically the phosphorylation on 2'-hydroxyl of the adenosine moiety of NAD to yield NADP. The chain is NAD kinase from Rickettsia akari (strain Hartford).